Consider the following 182-residue polypeptide: uncharacterized protein (182 aa).

This sequence belongs to the mimivirus L6/L7/L57 family.

This is an uncharacterized protein from Acanthamoeba polyphaga mimivirus (APMV).